The primary structure comprises 82 residues: RNA-binding protein Hfq (82 aa).

The 61-residue stretch at Asp11–Ile71 folds into the Sm domain.

Belongs to the Hfq family. In terms of assembly, homohexamer.

Its function is as follows. RNA chaperone that binds small regulatory RNA (sRNAs) and mRNAs to facilitate mRNA translational regulation in response to envelope stress, environmental stress and changes in metabolite concentrations. Also binds with high specificity to tRNAs. This Rhodopseudomonas palustris (strain TIE-1) protein is RNA-binding protein Hfq.